Here is a 721-residue protein sequence, read N- to C-terminus: Catalase-peroxidase (721 aa).

A cross-link (tryptophyl-tyrosyl-methioninium (Trp-Tyr) (with M-249)) is located at residues 95-223 (WHSAGSYRLF…LGAVHMGLIY (129 aa)). His96 functions as the Proton acceptor in the catalytic mechanism. The segment at residues 223-249 (YVNPQGRDGKPDPLKSAHDVRVTFKRM) is a cross-link (tryptophyl-tyrosyl-methioninium (Tyr-Met) (with W-95)). His264 contacts heme b.

The protein belongs to the peroxidase family. Peroxidase/catalase subfamily. As to quaternary structure, homodimer or homotetramer. It depends on heme b as a cofactor. In terms of processing, formation of the three residue Trp-Tyr-Met cross-link is important for the catalase, but not the peroxidase activity of the enzyme.

The catalysed reaction is H2O2 + AH2 = A + 2 H2O. It catalyses the reaction 2 H2O2 = O2 + 2 H2O. Functionally, bifunctional enzyme with both catalase and broad-spectrum peroxidase activity. The sequence is that of Catalase-peroxidase from Parvibaculum lavamentivorans (strain DS-1 / DSM 13023 / NCIMB 13966).